Reading from the N-terminus, the 413-residue chain is Tyrosine--tRNA ligase (413 aa).

Tyr-34 contacts L-tyrosine. The 'HIGH' region motif lies at Pro-39–His-48. L-tyrosine-binding residues include Tyr-164 and Gln-168. The 'KMSKS' region signature appears at Lys-225–Ser-229. Position 228 (Lys-228) interacts with ATP. The 67-residue stretch at Ile-347–Phe-413 folds into the S4 RNA-binding domain.

It belongs to the class-I aminoacyl-tRNA synthetase family. TyrS type 1 subfamily. Homodimer.

It is found in the cytoplasm. It catalyses the reaction tRNA(Tyr) + L-tyrosine + ATP = L-tyrosyl-tRNA(Tyr) + AMP + diphosphate + H(+). Functionally, catalyzes the attachment of tyrosine to tRNA(Tyr) in a two-step reaction: tyrosine is first activated by ATP to form Tyr-AMP and then transferred to the acceptor end of tRNA(Tyr). The sequence is that of Tyrosine--tRNA ligase from Aster yellows witches'-broom phytoplasma (strain AYWB).